The following is a 1028-amino-acid chain: Contactin-3 (1028 aa).

The N-terminal stretch at 1–19 (MMLSWKQLILLSFIGCLAG) is a signal peptide. Ig-like C2-type domains lie at 26-117 (PVFV…AKLQ), 122-208 (ENFK…ARVL), 227-313 (PKIE…GRLT), 318-402 (PYWV…AELK), 408-497 (PDFS…LVVT), and 499-593 (PTRI…AELI). 5 disulfides stabilise this stretch: cysteine 50–cysteine 100, cysteine 144–cysteine 196, cysteine 249–cysteine 297, cysteine 339–cysteine 386, and cysteine 431–cysteine 479. N-linked (GlcNAc...) asparagine glycosylation is found at asparagine 65 and asparagine 193. Asparagine 377, asparagine 468, asparagine 489, and asparagine 538 each carry an N-linked (GlcNAc...) asparagine glycan. An intrachain disulfide couples cysteine 521 to cysteine 577. Fibronectin type-III domains lie at 600–698 (PPEN…TEEA), 703–800 (APSE…SAEE), 805–901 (APSH…TKKT), and 902–998 (PPSQ…TSMD). The segment at 684-714 (GEPSLPSEKVRTEEAAPEVAPSEVSGGGGSR) is disordered. N-linked (GlcNAc...) asparagine glycosylation is found at asparagine 765, asparagine 860, asparagine 895, asparagine 913, asparagine 931, and asparagine 956. Serine 1002 carries the GPI-anchor amidated serine lipid modification. A propeptide spans 1003–1028 (TSAISDIHPVSGYISVLLFFIVNALW) (removed in mature form).

It belongs to the immunoglobulin superfamily. Contactin family. In terms of assembly, interacts with PTPRG. Specifically expressed in brain. Not expressed in peripheral tissues such as heart, lung, liver, spleen, kidney and skeletal muscle. In brain, it is restricted to subsets of neurons such as Purkinje cells of the cerebellum, granule cells of the dentate gyrus, and neurons in the superficial layers of the cerebral cortex.

Its subcellular location is the cell membrane. Its function is as follows. Contactins mediate cell surface interactions during nervous system development. Has some neurite outgrowth-promoting activity. The sequence is that of Contactin-3 (Cntn3) from Rattus norvegicus (Rat).